The following is a 349-amino-acid chain: Alanine racemase (349 aa).

Catalysis depends on Lys-35, which acts as the Proton acceptor; specific for D-alanine. The residue at position 35 (Lys-35) is an N6-(pyridoxal phosphate)lysine. Arg-130 contacts substrate. Tyr-244 acts as the Proton acceptor; specific for L-alanine in catalysis. Met-292 contributes to the substrate binding site.

This sequence belongs to the alanine racemase family. The cofactor is pyridoxal 5'-phosphate.

It carries out the reaction L-alanine = D-alanine. It functions in the pathway amino-acid biosynthesis; D-alanine biosynthesis; D-alanine from L-alanine: step 1/1. Functionally, catalyzes the interconversion of L-alanine and D-alanine. May also act on other amino acids. In Cereibacter sphaeroides (strain KD131 / KCTC 12085) (Rhodobacter sphaeroides), this protein is Alanine racemase (alr).